Reading from the N-terminus, the 205-residue chain is Rho-related GTP-binding protein RhoQ (205 aa).

16–23 (GDGAVGKT) contributes to the GTP binding site. The Effector region signature appears at 38–46 (YVPTVFDHY). GTP-binding positions include 63–67 (DTAGQ) and 121–124 (TQID). Residue cysteine 202 is modified to Cysteine methyl ester. Cysteine 202 is lipidated: S-farnesyl cysteine. Residues 203–205 (LIT) constitute a propeptide, removed in mature form.

This sequence belongs to the small GTPase superfamily. Rho family. In terms of assembly, interacts with CDC42EP4 in a GTP-dependent manner. Interacts with ARHGAP33/TCGAP. Interacts with CDC42EP1, CDC42EP2, CDC42EP3, PARD6A, PARD6G (and probably PARD6B) in a GTP-dependent manner. Part of a quaternary complex containing PARD3, some PARD6 protein (PARD6A, PARD6B or PARD6G) and some atypical PKC protein (PRKCI or PRKCZ). Interacts with EXO70 in a GTP-dependent manner. Interacts with GOPC. In terms of processing, may be post-translationally modified by both palmitoylation and polyisoprenylation.

Its subcellular location is the cytoplasm. The protein localises to the cell membrane. Its activity is regulated as follows. Regulated by guanine nucleotide exchange factors (GEFs) which promote the exchange of bound GDP for free GTP, GTPase activating proteins (GAPs) which increase the GTP hydrolysis activity, and GDP dissociation inhibitors which inhibit the dissociation of the nucleotide from the GTPase. Its function is as follows. Plasma membrane-associated small GTPase which cycles between an active GTP-bound and an inactive GDP-bound state. In active state binds to a variety of effector proteins to regulate cellular responses. Involved in epithelial cell polarization processes. May play a role in CFTR trafficking to the plasma membrane. Causes the formation of thin, actin-rich surface projections called filopodia. The protein is Rho-related GTP-binding protein RhoQ (RHOQ) of Homo sapiens (Human).